We begin with the raw amino-acid sequence, 501 residues long: Probable cytosol aminopeptidase (501 aa).

Mn(2+) contacts are provided by lysine 257 and aspartate 262. The active site involves lysine 269. Residues aspartate 281, aspartate 341, and glutamate 343 each contribute to the Mn(2+) site. Arginine 345 is a catalytic residue.

This sequence belongs to the peptidase M17 family. Requires Mn(2+) as cofactor.

Its subcellular location is the cytoplasm. The catalysed reaction is Release of an N-terminal amino acid, Xaa-|-Yaa-, in which Xaa is preferably Leu, but may be other amino acids including Pro although not Arg or Lys, and Yaa may be Pro. Amino acid amides and methyl esters are also readily hydrolyzed, but rates on arylamides are exceedingly low.. It carries out the reaction Release of an N-terminal amino acid, preferentially leucine, but not glutamic or aspartic acids.. Its function is as follows. Presumably involved in the processing and regular turnover of intracellular proteins. Catalyzes the removal of unsubstituted N-terminal amino acids from various peptides. The chain is Probable cytosol aminopeptidase from Synechococcus sp. (strain RCC307).